The sequence spans 503 residues: L-amino-acid oxidase (503 aa).

The N-terminal stretch at 1–18 is a signal peptide; it reads MNVFFMFSLLFLAALGSC. Cysteines 28 and 191 form a disulfide. Residues 61-62, 81-82, R89, and 105-108 each bind FAD; these read MS, EA, and GPMR. Residue R108 coordinates substrate. An N-linked (GlcNAc...) asparagine glycan is attached at N190. H241 contributes to the substrate binding site. FAD is bound at residue V279. Cysteines 349 and 430 form a disulfide. Position 390 (Y390) interacts with substrate. FAD-binding positions include E475 and 482 to 487; that span reads GWIDST. 482–483 provides a ligand contact to substrate; sequence GW.

Belongs to the flavin monoamine oxidase family. FIG1 subfamily. Homodimer; non-covalently linked. FAD is required as a cofactor. In terms of processing, N-glycosylated. The enzymatic activity is not affected by deglycosylation. As to expression, expressed by the venom gland.

It localises to the secreted. It carries out the reaction an L-alpha-amino acid + O2 + H2O = a 2-oxocarboxylate + H2O2 + NH4(+). The catalysed reaction is L-leucine + O2 + H2O = 4-methyl-2-oxopentanoate + H2O2 + NH4(+). It catalyses the reaction L-phenylalanine + O2 + H2O = 3-phenylpyruvate + H2O2 + NH4(+). The enzyme catalyses L-methionine + O2 + H2O = 4-methylsulfanyl-2-oxobutanoate + H2O2 + NH4(+). It carries out the reaction L-isoleucine + O2 + H2O = (S)-3-methyl-2-oxopentanoate + H2O2 + NH4(+). Catalyzes an oxidative deamination of predominantly hydrophobic and aromatic L-amino acids, thus producing hydrogen peroxide that may contribute to the diverse toxic effects of this enzyme. Is highly active on L-Met, L-Leu, L-Phe and L-Ile. Exhibits diverse biological activities, such as antibacterial on both Gram-positive and Gram-negative bacteria and antiparasitic activities, as well as induction of platelet aggregation. Effects of snake L-amino oxidases on platelets are controversial, since they either induce aggregation or inhibit agonist-induced aggregation. These different effects are probably due to different experimental conditions. This protein may also have activities in hemorrhage, hemolysis, edema, and apoptosis. The chain is L-amino-acid oxidase from Bothrops pauloensis (Neuwied's lancehead).